Reading from the N-terminus, the 806-residue chain is NADH-quinone oxidoreductase subunit G (806 aa).

Positions 15–93 (EMVTLTIDGV…DMVVRTQLTS (79 aa)) constitute a 2Fe-2S ferredoxin-type domain. Residues cysteine 49, cysteine 60, cysteine 63, and cysteine 77 each contribute to the [2Fe-2S] cluster site. Residues 95–134 (IADKAQHGVMELLLINHPLDCPMCDKGGECPLQNQAMSNG) form the 4Fe-4S His(Cys)3-ligated-type domain. [4Fe-4S] cluster is bound by residues histidine 111, cysteine 115, cysteine 118, cysteine 124, cysteine 164, cysteine 167, cysteine 170, cysteine 214, cysteine 240, cysteine 243, cysteine 247, and cysteine 275. Positions 233–289 (LVSSPSVCEHCASGCAQRTDHRRGKVLRRLAGDDPEVNEEWNCDKGRWAFTYATQPD) constitute a 4Fe-4S Mo/W bis-MGD-type domain.

Belongs to the complex I 75 kDa subunit family. It depends on [2Fe-2S] cluster as a cofactor. The cofactor is [4Fe-4S] cluster.

The enzyme catalyses a quinone + NADH + 5 H(+)(in) = a quinol + NAD(+) + 4 H(+)(out). Functionally, NDH-1 shuttles electrons from NADH, via FMN and iron-sulfur (Fe-S) centers, to quinones in the respiratory chain. The immediate electron acceptor for the enzyme in this species is believed to be menaquinone. Couples the redox reaction to proton translocation (for every two electrons transferred, four hydrogen ions are translocated across the cytoplasmic membrane), and thus conserves the redox energy in a proton gradient. The polypeptide is NADH-quinone oxidoreductase subunit G (nuoG) (Mycobacterium bovis (strain ATCC BAA-935 / AF2122/97)).